Consider the following 214-residue polypeptide: MTKQIKGILGEKLGMTQVWDENNRVVPVTVVKAGPNVVTQVRTNDVDGYESVQIAFGEIDPRKVNKPLKGHFAKADVTPRRHLVEIRTAAASEYTLGQEITAEAFESGVKVDVTAKSKGKGFAGVMKRHNFKGGKASHGAHRVHRMPGSIGGCATPGRVFKGMRMAGRMGNERVTTQNLTVHAVDAEKGLLLIKGAVPGPNGGLVLVRTAAKGA.

This sequence belongs to the universal ribosomal protein uL3 family. As to quaternary structure, part of the 50S ribosomal subunit. Forms a cluster with proteins L14 and L19.

One of the primary rRNA binding proteins, it binds directly near the 3'-end of the 23S rRNA, where it nucleates assembly of the 50S subunit. In Streptomyces coelicolor (strain ATCC BAA-471 / A3(2) / M145), this protein is Large ribosomal subunit protein uL3.